Reading from the N-terminus, the 279-residue chain is ESX-1 secretion-associated protein EspG1 (279 aa).

The protein belongs to the EspG family. As to quaternary structure, interacts specifically with ESX-1-dependent PE/PPE proteins.

The protein localises to the cytoplasm. Functionally, specific chaperone for cognate PE/PPE proteins. Plays an important role in preventing aggregation of PE/PPE dimers. This is ESX-1 secretion-associated protein EspG1 from Mycobacterium marinum (strain ATCC BAA-535 / M).